A 361-amino-acid chain; its full sequence is Ribosomal RNA small subunit methyltransferase H (361 aa).

Residues 54 to 56, Asp74, Tyr101, Asp122, and Gln129 contribute to the S-adenosyl-L-methionine site; that span reads GGH. A disordered region spans residues 318-361; sequence ARNSRASSAKLRAAQRLAEGQAPRPRRRNKYAPEGRDEPEGGAA. The span at 348–361 shows a compositional bias: basic and acidic residues; it reads YAPEGRDEPEGGAA.

The protein belongs to the methyltransferase superfamily. RsmH family.

Its subcellular location is the cytoplasm. The catalysed reaction is cytidine(1402) in 16S rRNA + S-adenosyl-L-methionine = N(4)-methylcytidine(1402) in 16S rRNA + S-adenosyl-L-homocysteine + H(+). Specifically methylates the N4 position of cytidine in position 1402 (C1402) of 16S rRNA. The chain is Ribosomal RNA small subunit methyltransferase H from Nitratidesulfovibrio vulgaris (strain DSM 19637 / Miyazaki F) (Desulfovibrio vulgaris).